The primary structure comprises 213 residues: Large ribosomal subunit protein uL3 (213 aa).

Residues 131–168 (GPMSHGSKNHRLPGSTGAGTTPGRVYPGKRMAGRSGND) form a disordered region.

This sequence belongs to the universal ribosomal protein uL3 family. As to quaternary structure, part of the 50S ribosomal subunit. Forms a cluster with proteins L14 and L19.

Functionally, one of the primary rRNA binding proteins, it binds directly near the 3'-end of the 23S rRNA, where it nucleates assembly of the 50S subunit. This Synechococcus elongatus (strain ATCC 33912 / PCC 7942 / FACHB-805) (Anacystis nidulans R2) protein is Large ribosomal subunit protein uL3.